The sequence spans 72 residues: Light-harvesting polypeptide B-885 alpha-1 chain (72 aa).

Over Ser-1–Thr-16 the chain is Cytoplasmic. Residues Val-17 to Leu-37 form a helical membrane-spanning segment. His-33 serves as a coordination point for a bacteriochlorophyll. The Periplasmic portion of the chain corresponds to Gly-38–Lys-72.

It belongs to the antenna complex alpha subunit family. In terms of assembly, the core complex is formed by different alpha and beta chains, binding bacteriochlorophyll molecules, and arranged most probably in tetrameric structures disposed around the reaction center. The non-pigmented gamma chains may constitute additional components.

It is found in the cell inner membrane. Antenna complexes are light-harvesting systems, which transfer the excitation energy to the reaction centers. In Rhodocyclus tenuis (Rhodospirillum tenue), this protein is Light-harvesting polypeptide B-885 alpha-1 chain.